A 442-amino-acid chain; its full sequence is D(2) dopamine receptor A (442 aa).

Residues 1 to 31 lie on the Extracellular side of the membrane; that stretch reads MDPQNLSMYNDDINNGTNGTAVDQKPHYNYY. 3 N-linked (GlcNAc...) asparagine glycosylation sites follow: Asn5, Asn15, and Asn18. A helical transmembrane segment spans residues 32–54; sequence AMLLTLLVFVIVFGNVLVCIAVS. The Cytoplasmic segment spans residues 55 to 64; the sequence is REKALQTTTN. The chain crosses the membrane as a helical span at residues 65–87; sequence YLIVSLAVADLLVATLVMPWAVY. Residues 88-102 lie on the Extracellular side of the membrane; the sequence is MEVVGEWRFSRIHCD. Cysteines 101 and 176 form a disulfide. A helical membrane pass occupies residues 103-124; that stretch reads IFVTLDVMMCTASILNLCAISI. The Cytoplasmic segment spans residues 125 to 145; sequence DRYTAVAMPMLYNTRYSSKRR. Residues 146 to 166 traverse the membrane as a helical segment; sequence VTVMISVVWVLSFAISCPLLF. Residues 167–182 lie on the Extracellular side of the membrane; that stretch reads GLNNTGSKVCIIDNPA. A helical transmembrane segment spans residues 183 to 207; the sequence is FVIYSSIVSFYVPFIVTLLVYVQIY. Residues 208–372 are Cytoplasmic-facing; it reads IVLRKRRKRV…SQHKEKKATQ (165 aa). The disordered stretch occupies residues 273-335; that stretch reads DMEMEMMSST…KNGHPKDSTK (63 aa). Residues 304–318 show a composition bias toward polar residues; sequence ATSNQCKNASLTSPV. Positions 322 to 335 are enriched in basic and acidic residues; the sequence is YKAEKNGHPKDSTK. A helical membrane pass occupies residues 373–394; it reads MLAIVLGVFIICWLPFFIIHIL. At 395–408 the chain is on the extracellular side; sequence NMHCNCNIPQALYS. The cysteines at positions 398 and 400 are disulfide-linked. The chain crosses the membrane as a helical span at residues 409–430; sequence AFTWLGYVNSAVNPIIYTTFNV. Topologically, residues 431–442 are cytoplasmic; it reads EFRKAFIKILHC. The S-palmitoyl cysteine moiety is linked to residue Cys442.

It belongs to the G-protein coupled receptor 1 family. Post-translationally, palmitoylated. Palmitoylation is probably required for proper localization to the plasma membrane and stability of the receptor. As to expression, brain; pituitary.

It localises to the cell membrane. The protein localises to the golgi apparatus membrane. Functionally, this is one of the five types (D1 to D5) of receptors for dopamine. The activity of this receptor is mediated by G proteins which inhibits adenylyl cyclase. In Xenopus D2R is involved in the regulation of the melanotrope cells of the intermediate pituitary during background adaptation of the animal. The chain is D(2) dopamine receptor A (drd2-a) from Xenopus laevis (African clawed frog).